The chain runs to 486 residues: UDP-N-acetylmuramoyl-L-alanyl-D-glutamate--2,6-diaminopimelate ligase (486 aa).

Position 30 (Ser-30) interacts with UDP-N-acetyl-alpha-D-muramoyl-L-alanyl-D-glutamate. 111–117 (GTNGKTT) provides a ligand contact to ATP. UDP-N-acetyl-alpha-D-muramoyl-L-alanyl-D-glutamate-binding positions include 153–154 (TT), Ser-180, Gln-186, and Arg-188. Lys-220 bears the N6-carboxylysine mark. Residues Arg-378, 402-405 (DNPR), Gly-455, and Glu-459 contribute to the meso-2,6-diaminopimelate site. The Meso-diaminopimelate recognition motif signature appears at 402–405 (DNPR).

It belongs to the MurCDEF family. MurE subfamily. Requires Mg(2+) as cofactor. In terms of processing, carboxylation is probably crucial for Mg(2+) binding and, consequently, for the gamma-phosphate positioning of ATP.

The protein resides in the cytoplasm. It carries out the reaction UDP-N-acetyl-alpha-D-muramoyl-L-alanyl-D-glutamate + meso-2,6-diaminopimelate + ATP = UDP-N-acetyl-alpha-D-muramoyl-L-alanyl-gamma-D-glutamyl-meso-2,6-diaminopimelate + ADP + phosphate + H(+). It participates in cell wall biogenesis; peptidoglycan biosynthesis. Functionally, catalyzes the addition of meso-diaminopimelic acid to the nucleotide precursor UDP-N-acetylmuramoyl-L-alanyl-D-glutamate (UMAG) in the biosynthesis of bacterial cell-wall peptidoglycan. In Parabacteroides distasonis (strain ATCC 8503 / DSM 20701 / CIP 104284 / JCM 5825 / NCTC 11152), this protein is UDP-N-acetylmuramoyl-L-alanyl-D-glutamate--2,6-diaminopimelate ligase.